The primary structure comprises 459 residues: Vacuolar amino acid transporter 5 (459 aa).

The next 8 helical transmembrane spans lie at glycine 8–phenylalanine 28, leucine 33–leucine 53, valine 82–isoleucine 102, phenylalanine 131–phenylalanine 151, alanine 161–valine 181, leucine 206–isoleucine 226, isoleucine 240–tyrosine 260, and serine 278–leucine 298. The span at phenylalanine 335 to glutamate 351 shows a compositional bias: polar residues. The interval phenylalanine 335–leucine 354 is disordered. Transmembrane regions (helical) follow at residues isoleucine 364–alanine 384, valine 386–phenylalanine 406, and leucine 434–leucine 454.

It belongs to the amino acid/polyamine transporter 2 family.

The protein localises to the vacuole membrane. Probable amino acid transporter of unknown specificity. The protein is Vacuolar amino acid transporter 5 (AVT5) of Saccharomyces cerevisiae (strain ATCC 204508 / S288c) (Baker's yeast).